The following is a 375-amino-acid chain: Queuine tRNA-ribosyltransferase (375 aa).

D89 serves as the catalytic Proton acceptor. Residues 89-93, D143, Q187, and G214 each bind substrate; that span reads DSGGF. Residues 245-251 form an RNA binding region; that stretch reads GVGKPED. The active-site Nucleophile is the D264. The tract at residues 269–273 is RNA binding; important for wobble base 34 recognition; it reads TRNAR. Residues C302, C304, C307, and H333 each contribute to the Zn(2+) site.

Belongs to the queuine tRNA-ribosyltransferase family. Homodimer. Within each dimer, one monomer is responsible for RNA recognition and catalysis, while the other monomer binds to the replacement base PreQ1. Zn(2+) serves as cofactor.

It catalyses the reaction 7-aminomethyl-7-carbaguanine + guanosine(34) in tRNA = 7-aminomethyl-7-carbaguanosine(34) in tRNA + guanine. It participates in tRNA modification; tRNA-queuosine biosynthesis. Catalyzes the base-exchange of a guanine (G) residue with the queuine precursor 7-aminomethyl-7-deazaguanine (PreQ1) at position 34 (anticodon wobble position) in tRNAs with GU(N) anticodons (tRNA-Asp, -Asn, -His and -Tyr). Catalysis occurs through a double-displacement mechanism. The nucleophile active site attacks the C1' of nucleotide 34 to detach the guanine base from the RNA, forming a covalent enzyme-RNA intermediate. The proton acceptor active site deprotonates the incoming PreQ1, allowing a nucleophilic attack on the C1' of the ribose to form the product. After dissociation, two additional enzymatic reactions on the tRNA convert PreQ1 to queuine (Q), resulting in the hypermodified nucleoside queuosine (7-(((4,5-cis-dihydroxy-2-cyclopenten-1-yl)amino)methyl)-7-deazaguanosine). The polypeptide is Queuine tRNA-ribosyltransferase (Salmonella agona (strain SL483)).